We begin with the raw amino-acid sequence, 90 residues long: Long neurotoxin OH-34 (90 aa).

An N-terminal signal peptide occupies residues 1–20 (KTLLLTLVVVTILCLDLGYT). Intrachain disulfides connect cysteine 23–cysteine 41, cysteine 34–cysteine 62, cysteine 47–cysteine 51, cysteine 66–cysteine 77, and cysteine 78–cysteine 83.

Belongs to the three-finger toxin family. Long-chain subfamily. Type II alpha-neurotoxin sub-subfamily. In terms of tissue distribution, expressed by the venom gland.

The protein localises to the secreted. Functionally, binds with high affinity to muscular (alpha-1/CHRNA1) and neuronal (alpha-7/CHRNA7) nicotinic acetylcholine receptor (nAChR) and inhibits acetylcholine from binding to the receptor, thereby impairing neuromuscular and neuronal transmission. The protein is Long neurotoxin OH-34 of Ophiophagus hannah (King cobra).